A 186-amino-acid chain; its full sequence is ATP synthase subunit b 3 (186 aa).

Residues 5 to 25 form a helical membrane-spanning segment; sequence LLPALLTFSATPALAAKGPFF.

This sequence belongs to the ATPase B chain family. As to quaternary structure, F-type ATPases have 2 components, F(1) - the catalytic core - and F(0) - the membrane proton channel. F(1) has five subunits: alpha(3), beta(3), gamma(1), delta(1), epsilon(1). F(0) has three main subunits: a(1), b(2) and c(10-14). The alpha and beta chains form an alternating ring which encloses part of the gamma chain. F(1) is attached to F(0) by a central stalk formed by the gamma and epsilon chains, while a peripheral stalk is formed by the delta and b chains.

It localises to the cell inner membrane. Functionally, f(1)F(0) ATP synthase produces ATP from ADP in the presence of a proton or sodium gradient. F-type ATPases consist of two structural domains, F(1) containing the extramembraneous catalytic core and F(0) containing the membrane proton channel, linked together by a central stalk and a peripheral stalk. During catalysis, ATP synthesis in the catalytic domain of F(1) is coupled via a rotary mechanism of the central stalk subunits to proton translocation. Its function is as follows. Component of the F(0) channel, it forms part of the peripheral stalk, linking F(1) to F(0). The protein is ATP synthase subunit b 3 of Dinoroseobacter shibae (strain DSM 16493 / NCIMB 14021 / DFL 12).